Consider the following 241-residue polypeptide: Co-chaperone protein p23-1 (241 aa).

The 90-residue stretch at 2–91 folds into the CS domain; the sequence is SRHPEVKWAE…AEPERWNKLL (90 aa). MGG repeat units lie at residues 129–131, 132–134, 135–137, 138–140, 141–143, 144–146, 147–149, 150–152, 162–164, 165–167, 168–170, 171–173, 180–182, 183–185, 186–188, 189–191, and 192–194; these read MGG. Residues 129-194 form a 17 X 3 AA repeats of M-G-G region; sequence MGGMGGMGGM…GMGGMGGMGG (66 aa). A disordered region spans residues 188–241; sequence GMGGMGGMEEFEDSDDEEETAKSGDKKDDAVKEEGLATEKAPAAEETTSVKEDK. Residues 196–206 show a composition bias toward acidic residues; the sequence is EEFEDSDDEEE. Residues 207-224 are compositionally biased toward basic and acidic residues; it reads TAKSGDKKDDAVKEEGLA. The segment covering 225–234 has biased composition (low complexity); it reads TEKAPAAEET.

The protein belongs to the p23/wos2 family. As to quaternary structure, interacts with HSP90 in an ATP-dependent manner. Interacts with HSP90-5, HSP90-6 and HSP90-7. As to expression, widely expressed but preferentially in the root meristem.

The protein localises to the cytoplasm. It is found in the nucleus. In terms of biological role, acts as a co-chaperone for HSP90. Controls root development through the modulation of auxin distribution in the root meristem. In Arabidopsis thaliana (Mouse-ear cress), this protein is Co-chaperone protein p23-1.